Reading from the N-terminus, the 339-residue chain is ATPase GET3 (339 aa).

37 to 44 (KGGVGKTT) serves as a coordination point for ATP. The active site involves Asp66. Positions 237 and 264 each coordinate ATP. Residues Cys275 and Cys278 each coordinate Zn(2+).

It belongs to the arsA ATPase family. Homodimer.

Its subcellular location is the cytoplasm. The protein localises to the endoplasmic reticulum. ATPase required for the post-translational delivery of tail-anchored (TA) proteins to the endoplasmic reticulum. Recognizes and selectively binds the transmembrane domain of TA proteins in the cytosol. This complex then targets to the endoplasmic reticulum by membrane-bound receptors, where the tail-anchored protein is released for insertion. This process is regulated by ATP binding and hydrolysis. ATP binding drives the homodimer towards the closed dimer state, facilitating recognition of newly synthesized TA membrane proteins. ATP hydrolysis is required for insertion. Subsequently, the homodimer reverts towards the open dimer state, lowering its affinity for the membrane-bound receptor, and returning it to the cytosol to initiate a new round of targeting. The chain is ATPase GET3 from Rhodotorula glutinis (Yeast).